We begin with the raw amino-acid sequence, 77 residues long: Acyl carrier protein (77 aa).

The Carrier domain maps to Ser-2–Thr-77. At Ser-37 the chain carries O-(pantetheine 4'-phosphoryl)serine.

This sequence belongs to the acyl carrier protein (ACP) family. Post-translationally, 4'-phosphopantetheine is transferred from CoA to a specific serine of apo-ACP by AcpS. This modification is essential for activity because fatty acids are bound in thioester linkage to the sulfhydryl of the prosthetic group.

It is found in the cytoplasm. Its pathway is lipid metabolism; fatty acid biosynthesis. In terms of biological role, carrier of the growing fatty acid chain in fatty acid biosynthesis. This chain is Acyl carrier protein, found in Marinobacter nauticus (strain ATCC 700491 / DSM 11845 / VT8) (Marinobacter aquaeolei).